Consider the following 248-residue polypeptide: Ureidoacrylate amidohydrolase RutB (248 aa).

Asp-41 serves as the catalytic Proton acceptor. Lys-150 is an active-site residue. Cys-183 acts as the Nucleophile in catalysis.

It belongs to the isochorismatase family. RutB subfamily.

It catalyses the reaction (Z)-3-ureidoacrylate + H2O + H(+) = (Z)-3-aminoacrylate + NH4(+) + CO2. The enzyme catalyses (Z)-3-ureidoacrylate + H2O = (Z)-3-aminoacrylate + carbamate + H(+). The catalysed reaction is (Z)-2-methylureidoacrylate + H2O + H(+) = (Z)-2-methylaminoacrylate + NH4(+) + CO2. Functionally, hydrolyzes ureidoacrylate to form aminoacrylate and carbamate. The carbamate hydrolyzes spontaneously, thereby releasing one of the nitrogen atoms of the pyrimidine ring as ammonia and one of its carbon atoms as CO2. This chain is Ureidoacrylate amidohydrolase RutB, found in Methylorubrum extorquens (strain DSM 6343 / CIP 106787 / DM4) (Methylobacterium extorquens).